The following is a 336-amino-acid chain: CST complex subunit STN1 (336 aa).

Positions 49–126 form a DNA-binding region, OB; sequence VDILGTVVCV…EVVASIFYKV (78 aa). 2 winged helix-turn-helix (wHTH) regions span residues 162–263 and 264–336; these read QSQE…YVTD and HDKE…YTAF.

It belongs to the CTC1 family. In terms of assembly, component of the CST complex.

It localises to the nucleus. The protein resides in the chromosome. Its subcellular location is the telomere. Component of the CST complex proposed to act as a specialized replication factor promoting DNA replication under conditions of replication stress or natural replication barriers such as the telomere duplex. The CST complex binds single-stranded DNA with high affinity in a sequence-independent manner, while isolated subunits bind DNA with low affinity by themselves. Initially the CST complex has been proposed to protect telomeres from DNA degradation. However, the CST complex has been shown to be involved in several aspects of telomere replication. The chain is CST complex subunit STN1 from Aquarana catesbeiana (American bullfrog).